The following is a 124-amino-acid chain: MAATPVPTALGAYRLLLRATRIAFHGDFTTLHAARAEARKQFDQHRELGVDTPMRIQHAVETAEILRTNVVQGIKVSDAGEDTDRYELRIHEHIERGDNDTIKTAGKNKKVKVAVGKTCSNTQS.

It belongs to the complex I LYR family. MZM1 subfamily. In terms of assembly, interacts with RIP1.

It is found in the mitochondrion matrix. Functionally, assembly factor required for Rieske Fe-S protein RIP1 incorporation into the cytochrome b-c1 (CIII) complex. Functions as a chaperone, binding to this subunit within the mitochondrial matrix and stabilizing it prior to its translocation and insertion into the late CIII dimeric intermediate within the mitochondrial inner membrane. Modulates the mitochondrial matrix zinc pool. The protein is Mitochondrial zinc maintenance protein 1, mitochondrial (MZM1) of Ajellomyces dermatitidis (strain ER-3 / ATCC MYA-2586) (Blastomyces dermatitidis).